Reading from the N-terminus, the 511-residue chain is Cytochrome P450 monooxygenase cypX (511 aa).

The chain crosses the membrane as a helical span at residues 18-38 (LPFSLALVAAAFVLYNIVSII). Asn162 and Asn407 each carry an N-linked (GlcNAc...) asparagine glycan. Cys454 contributes to the heme binding site.

The protein belongs to the cytochrome P450 family. Heme serves as cofactor.

It localises to the membrane. Its pathway is mycotoxin biosynthesis. Its function is as follows. Cytochrome P450 monooxygenase; part of the fragmented gene cluster that mediates the biosynthesis of dothistromin (DOTH), a polyketide toxin very similar in structure to the aflatoxin precursor, versicolorin B. The first step of the pathway is the conversion of acetate to norsolorinic acid (NOR) and requires the fatty acid synthase subunits hexA and hexB, as well as the polyketide synthase pksA. PksA combines a hexanoyl starter unit and 7 malonyl-CoA extender units to synthesize the precursor NOR. The hexanoyl starter unit is provided to the acyl-carrier protein (ACP) domain by the fungal fatty acid synthase hexA/hexB. The second step is the conversion of NOR to averantin (AVN) and requires the norsolorinic acid ketoreductase nor1, which catalyzes the dehydration of norsolorinic acid to form (1'S)-averantin. The cytochrome P450 monooxygenase avnA then catalyzes the hydroxylation of AVN to 5'hydroxyaverantin (HAVN). The next step is performed by adhA that transforms HAVN to averufin (AVF). Averufin might then be converted to hydroxyversicolorone by cypX and avfA. Hydroxyversicolorone is further converted versiconal hemiacetal acetate (VHA) by moxY. VHA is then the substrate for the versiconal hemiacetal acetate esterase est1 to yield versiconal (VAL). Versicolorin B synthase vbsA then converts VAL to versicolorin B (VERB) by closing the bisfuran ring. Then, the activity of the versicolorin B desaturase verB leads to versicolorin A (VERA). DotB, a predicted chloroperoxidase, may perform epoxidation of the A-ring of VERA. Alternatively, a cytochrome P450, such as cypX or avnA could catalyze this step. It is also possible that another, uncharacterized, cytochrome P450 enzyme is responsible for this step. Opening of the epoxide could potentially be achieved by the epoxide hydrolase epoA. However, epoA seems not to be required for DOTH biosynthesis, but other epoxide hydrolases may have the ability to complement this hydrolysis. Alternatively, opening of the epoxide ring could be achieved non-enzymatically. The next step is the deoxygenation of ring A to yield the 5,8-dihydroxyanthraquinone which is most likely catalyzed by the NADPH dehydrogenase encoded by ver1. The last stages of DOTH biosynthesis are proposed to involve hydroxylation of the bisfuran. OrdB and norB might have oxidative roles here. An alternative possibility is that cytochrome P450 monoogenases such as avnA and cypX might perform these steps in addition to previously proposed steps. The sequence is that of Cytochrome P450 monooxygenase cypX from Dothistroma septosporum (Red band needle blight fungus).